Reading from the N-terminus, the 599-residue chain is Nucleolar protein dnt1 (599 aa).

Position 174 is a phosphoserine (Ser-174). Disordered stretches follow at residues 210–262 (TQEE…PSRL) and 292–599 (DKSL…AALV). Over residues 218-241 (QSFNSSLTPSQPTTYNRANFFSIN) the composition is skewed to polar residues. Positions 242–251 (DASSDSSSDA) are enriched in low complexity. A compositionally biased stretch (basic and acidic residues) spans 292-303 (DKSLRSSTREVS). Ser-306 bears the Phosphoserine mark. The segment covering 307–320 (PNEDSVNDDSSSDV) has biased composition (acidic residues). The segment covering 321 to 333 (SDEKETEAKHEIR) has biased composition (basic and acidic residues). Polar residues predominate over residues 344-354 (SHPSTAVPSEN). Low complexity predominate over residues 364 to 380 (LSESSTTSISSSPSENS). Residues 390-401 (DSPNKSLVNDNV) are compositionally biased toward polar residues. The span at 402 to 413 (SAKHDKESENGK) shows a compositional bias: basic and acidic residues. Residues 421 to 431 (QTLVTTSTISA) are compositionally biased toward polar residues. Residues 436–452 (PSDEIGSENDSDSDSDS) show a composition bias toward acidic residues. Residues 456–480 (VPLSQLQKKSQQRNSVSHEIQNRGT) are compositionally biased toward polar residues. Positions 483–500 (SPKEPKAKPSTERPETHR) are enriched in basic and acidic residues. The segment covering 501–514 (TLSYSRLSELSKTF) has biased composition (polar residues). Thr-513 is subject to Phosphothreonine. Basic and acidic residues-rich tracts occupy residues 533–542 (ESKEEGRSDE) and 558–574 (NSEKEDRSNPIPVEKRA).

Phosphorylated by clp1.

The protein resides in the cytoplasm. Its subcellular location is the nucleus. It localises to the nucleolus. It is found in the cytoskeleton. The protein localises to the spindle. Functionally, negatively regulates the septation initiation network (SIN) pathway, independently of the cdc14 phosphatase clp1. May also have a role in silencing rDNA transcription. Required for maintaining the exclusive nucleolus localization of nuc1. The polypeptide is Nucleolar protein dnt1 (dnt1) (Schizosaccharomyces pombe (strain 972 / ATCC 24843) (Fission yeast)).